The primary structure comprises 254 residues: MAGRYKGLVYSRKRGRYGKTYQALGVKSQRELEQLVNQPGRPVSNRRPALQVAEYLWTTNKTGMTFSPGGSTFLITNFPQGANENCRHTNRTITYKMAVKTWVALDGSMFSRVSKFPIYFWLVYDKNPGESNPSPSAIFDSLYQDQPGTWTVTRNVCHRFVVKKTWSCMLESNGVDPNAKQGSSYYGPGPCYQWRHVTKFFKRLGVSTEWKNSSTGDVADIKEGALYLVCAPGGGATVRVGGRFRMYFKSVGNQ.

Residues 9-35 carry the Bipartite nuclear localization signal motif; that stretch reads VYSRKRGRYGKTYQALGVKSQRELEQL.

This sequence belongs to the geminiviridae capsid protein family. As to quaternary structure, homomultimer. Interacts with the movement protein. Binds to single-stranded and double-stranded viral DNA.

Its subcellular location is the virion. The protein localises to the host nucleus. Its function is as follows. Encapsidates the viral genome into characteristic twinned ('geminate') particles. Binds the genomic viral ssDNA and shuttles it into and out of the cell nucleus. Plays a role in protection of the genome from degradation, virus acquisition and transmission by insect vectors, infectivity, and systemic movement. The CP of monopartite geminiviruses is absolutely essential for virus movement. In Tobacco yellow dwarf virus (strain Australia) (TYDV), this protein is Capsid protein.